The chain runs to 210 residues: Scoloptoxin SSD552 (210 aa).

Residues 1 to 23 (MNILLSSTLFVLLMFQIIGSGMG) form the signal peptide.

Post-translationally, contains 3 disulfide bonds. Expressed by the venom gland.

The protein localises to the secreted. The chain is Scoloptoxin SSD552 from Scolopendra dehaani (Thai centipede).